The sequence spans 189 residues: MPRAPRTYSKTYSVPKRPYESARLDAELKLAGEYGLKNKREIYRIGFQLSKIRRAARDLLTRDEKDPKRLFEGNALIRRLVRIGVLSEDKMKLDYVLALKPEDFLERRLQTQVFKLGLARSIHHARVLITQRHIAVGKQIVNIPSFTVRLDSQKHIDFAHNSPYGGGRAGRVKRKNQGKGGEEGAEEEE.

Residues Arg107–Gly178 enclose the S4 RNA-binding domain. The disordered stretch occupies residues His160 to Glu189.

The protein belongs to the universal ribosomal protein uS4 family. As to quaternary structure, component of the small ribosomal subunit. Mature ribosomes consist of a small (40S) and a large (60S) subunit. The 40S subunit contains about 32 different proteins and 1 molecule of RNA (18S). The 60S subunit contains 45 different proteins and 3 molecules of RNA (25S, 5.8S and 5S).

Its subcellular location is the cytoplasm. Component of the ribosome, a large ribonucleoprotein complex responsible for the synthesis of proteins in the cell. The small ribosomal subunit (SSU) binds messenger RNAs (mRNAs) and translates the encoded message by selecting cognate aminoacyl-transfer RNA (tRNA) molecules. The large subunit (LSU) contains the ribosomal catalytic site termed the peptidyl transferase center (PTC), which catalyzes the formation of peptide bonds, thereby polymerizing the amino acids delivered by tRNAs into a polypeptide chain. The nascent polypeptides leave the ribosome through a tunnel in the LSU and interact with protein factors that function in enzymatic processing, targeting, and the membrane insertion of nascent chains at the exit of the ribosomal tunnel. RPS9B is involved in nucleolar processing of pre-18S ribosomal RNA and ribosome assembly. The polypeptide is Small ribosomal subunit protein uS4 (RPS9B) (Candida albicans (strain SC5314 / ATCC MYA-2876) (Yeast)).